Reading from the N-terminus, the 226-residue chain is Phosphoribosylformylglycinamidine synthase subunit PurQ (226 aa).

The Glutamine amidotransferase type-1 domain occupies 2-225 (RFGIVVFPGS…MHYLEGGKNN (224 aa)). Residue Cys-86 is the Nucleophile of the active site. Active-site residues include His-194 and Glu-196.

Part of the FGAM synthase complex composed of 1 PurL, 1 PurQ and 2 PurS subunits.

The protein localises to the cytoplasm. The enzyme catalyses N(2)-formyl-N(1)-(5-phospho-beta-D-ribosyl)glycinamide + L-glutamine + ATP + H2O = 2-formamido-N(1)-(5-O-phospho-beta-D-ribosyl)acetamidine + L-glutamate + ADP + phosphate + H(+). The catalysed reaction is L-glutamine + H2O = L-glutamate + NH4(+). It functions in the pathway purine metabolism; IMP biosynthesis via de novo pathway; 5-amino-1-(5-phospho-D-ribosyl)imidazole from N(2)-formyl-N(1)-(5-phospho-D-ribosyl)glycinamide: step 1/2. In terms of biological role, part of the phosphoribosylformylglycinamidine synthase complex involved in the purines biosynthetic pathway. Catalyzes the ATP-dependent conversion of formylglycinamide ribonucleotide (FGAR) and glutamine to yield formylglycinamidine ribonucleotide (FGAM) and glutamate. The FGAM synthase complex is composed of three subunits. PurQ produces an ammonia molecule by converting glutamine to glutamate. PurL transfers the ammonia molecule to FGAR to form FGAM in an ATP-dependent manner. PurS interacts with PurQ and PurL and is thought to assist in the transfer of the ammonia molecule from PurQ to PurL. This Alkaliphilus metalliredigens (strain QYMF) protein is Phosphoribosylformylglycinamidine synthase subunit PurQ.